A 611-amino-acid polypeptide reads, in one-letter code: Threonine--tRNA ligase (611 aa).

Positions 1-27 (MAGPEPEPVSSAAATTPAPSAPVVLPK) are disordered. Low complexity predominate over residues 8 to 24 (PVSSAAATTPAPSAPVV). The segment at 209–502 (DHRRIGKDLD…MTENYAGDYP (294 aa)) is catalytic. Positions 302, 353, and 479 each coordinate Zn(2+).

It belongs to the class-II aminoacyl-tRNA synthetase family. Homodimer. Zn(2+) serves as cofactor.

The protein localises to the cytoplasm. The enzyme catalyses tRNA(Thr) + L-threonine + ATP = L-threonyl-tRNA(Thr) + AMP + diphosphate + H(+). In terms of biological role, catalyzes the attachment of threonine to tRNA(Thr) in a two-step reaction: L-threonine is first activated by ATP to form Thr-AMP and then transferred to the acceptor end of tRNA(Thr). Also edits incorrectly charged L-seryl-tRNA(Thr). In Synechococcus sp. (strain CC9605), this protein is Threonine--tRNA ligase.